The primary structure comprises 1122 residues: Cytosolic carboxypeptidase 4 (1122 aa).

Residues 287 to 338 (PGSTSSELPLNLTEEDFDDDGDEEMDKDSDVEAVKEDDDLETDLSKLSSKPG) are disordered. Over residues 299–313 (TEEDFDDDGDEEMDK) the composition is skewed to acidic residues. The 291-residue stretch at 731–1021 (YPYTYSTLMT…MYCLGLLILE (291 aa)) folds into the Peptidase M14 domain. Zn(2+)-binding residues include histidine 803, glutamate 806, and histidine 900. The active-site Proton donor/acceptor is the glutamate 985. Residues 1099–1122 (CALNKDEEEEEKEEGTGWRRRSVT) are disordered.

Belongs to the peptidase M14 family. Interacts with MYLK. Interacts with TCF4. The cofactor is Zn(2+). Widely expressed at low level. Expressed in eye, muscle, pituitary, testis and to a lower extent in brain.

Its subcellular location is the cytoplasm. The protein localises to the cytosol. The enzyme catalyses (L-glutamyl)(n+1)-gamma-L-glutamyl-L-glutamyl-[protein] + H2O = (L-glutamyl)(n)-gamma-L-glutamyl-L-glutamyl-[protein] + L-glutamate. It carries out the reaction C-terminal L-alpha-aminoacyl-L-glutamyl-L-glutamyl-[tubulin] + H2O = C-terminal L-alpha-aminoacyl-L-glutamyl-[tubulin] + L-glutamate. Metallocarboxypeptidase that mediates deglutamylation of tubulin and non-tubulin target proteins. Catalyzes the removal of polyglutamate side chains present on the gamma-carboxyl group of glutamate residues within the C-terminal tail of tubulin protein. Specifically cleaves tubulin long-side-chains, while it is not able to remove the branching point glutamate. Also catalyzes the removal of polyglutamate residues from the carboxy-terminus of non-tubulin proteins such as MYLK. The protein is Cytosolic carboxypeptidase 4 of Mus musculus (Mouse).